The primary structure comprises 216 residues: 3,4-dihydroxy-2-butanone 4-phosphate synthase (216 aa).

Residues 33–34 (RE), aspartate 38, 146–150 (RRGHT), and glutamate 170 each bind D-ribulose 5-phosphate. Mg(2+) is bound at residue glutamate 34. Residue histidine 149 participates in Mg(2+) binding.

The protein belongs to the DHBP synthase family. As to quaternary structure, homodimer. The cofactor is Mg(2+). Mn(2+) serves as cofactor.

The catalysed reaction is D-ribulose 5-phosphate = (2S)-2-hydroxy-3-oxobutyl phosphate + formate + H(+). It participates in cofactor biosynthesis; riboflavin biosynthesis; 2-hydroxy-3-oxobutyl phosphate from D-ribulose 5-phosphate: step 1/1. Its function is as follows. Catalyzes the conversion of D-ribulose 5-phosphate to formate and 3,4-dihydroxy-2-butanone 4-phosphate. The chain is 3,4-dihydroxy-2-butanone 4-phosphate synthase from Pseudomonas putida (strain ATCC 47054 / DSM 6125 / CFBP 8728 / NCIMB 11950 / KT2440).